A 75-amino-acid polypeptide reads, in one-letter code: Small ribosomal subunit protein bS18 (75 aa).

It belongs to the bacterial ribosomal protein bS18 family. In terms of assembly, part of the 30S ribosomal subunit. Forms a tight heterodimer with protein bS6.

Its function is as follows. Binds as a heterodimer with protein bS6 to the central domain of the 16S rRNA, where it helps stabilize the platform of the 30S subunit. The sequence is that of Small ribosomal subunit protein bS18 from Pseudoalteromonas atlantica (strain T6c / ATCC BAA-1087).